A 434-amino-acid polypeptide reads, in one-letter code: Guanosine-inosine kinase (434 aa).

Residues 40–45, 93–97, and arginine 198 each bind GMP; these read DQTLVD and GTIGN. ATP-binding positions include 284 to 289, glycine 357, and asparagine 402; that span reads TAGPIG.

It belongs to the carbohydrate kinase PfkB family. It depends on Mg(2+) as a cofactor.

The catalysed reaction is guanosine + ATP = GMP + ADP + H(+). It carries out the reaction inosine + ATP = IMP + ADP + H(+). Its pathway is purine metabolism; IMP biosynthesis via salvage pathway; IMP from inosine: step 1/1. It functions in the pathway purine metabolism; GMP biosynthesis via salvage pathway. Functionally, catalyzes the phosphorylation of guanosine and inosine to GMP and IMP, respectively. In Escherichia coli O157:H7, this protein is Guanosine-inosine kinase.